The chain runs to 432 residues: Myb family transcription factor EFM (432 aa).

A coiled-coil region spans residues 36–81 (LEDLLSRLEQERLKIDAFKRELPLCMQLLNNAVEVYKQQLEAYRAN). Polar residues-rich tracts occupy residues 123 to 139 (SQSE…TDQS) and 187 to 197 (SPTNEHTNGQD). The tract at residues 123-237 (SQSETKPKNI…SQSNRKARRC (115 aa)) is disordered. Positions 201–231 (ESMINNDNNYNNNNNNNSNSNGVSSTTSQSN) are enriched in low complexity. The 61-residue stretch at 230 to 290 (SNRKARRCWS…HLQKYRLHTR (61 aa)) folds into the HTH myb-type domain. Residues 261-286 (PKQIRELMKVDGLTNDEVKSHLQKYR) constitute a DNA-binding region (H-T-H motif). The tract at residues 354 to 412 (FYTTPPPPQPLHHHHFQTFNGSSGGTASTDSTHHQVTDSPTVEGKSPESGGGERKGLAA) is disordered.

In terms of assembly, interacts with JMJ30, but not with SVP, FLC or CO. In terms of tissue distribution, specifically expressed in vascular tissues of cotyledons, rosette leaves and cauline leaves. Not detected in the vegetative shoot apical meristem.

The protein localises to the nucleus. Transcription factor acting as a flowering repressor, directly repressing FT expression in a dosage-dependent manner in the leaf vasculature. This is Myb family transcription factor EFM from Arabidopsis thaliana (Mouse-ear cress).